Consider the following 552-residue polypeptide: Undecaprenyl phosphate-alpha-4-amino-4-deoxy-L-arabinose arabinosyl transferase (552 aa).

The next 11 membrane-spanning stretches (helical) occupy residues 4-24 (IAGW…PLPG), 81-101 (FAVR…VFWL), 113-133 (VVAV…SYAV), 176-196 (FMTK…PWVI), 207-227 (FGPL…LAIA), 255-275 (APFW…LGLL), 289-309 (QGGD…FSIA), 313-333 (LPTY…GYVQ), 351-371 (LLVG…WGIT), 384-404 (VILG…SLYH), and 411-431 (WSAA…PQQV).

Belongs to the glycosyltransferase 83 family.

Its subcellular location is the cell inner membrane. The catalysed reaction is 4-amino-4-deoxy-alpha-L-arabinopyranosyl di-trans,octa-cis-undecaprenyl phosphate + lipid IVA = lipid IIA + di-trans,octa-cis-undecaprenyl phosphate.. The protein operates within lipopolysaccharide metabolism; 4-amino-4-deoxy-beta-L-arabinose-lipid A biosynthesis. Functionally, catalyzes the transfer of the L-Ara4N moiety of the glycolipid undecaprenyl phosphate-alpha-L-Ara4N to lipid A. The modified arabinose is attached to lipid A and is required for resistance to polymyxin and cationic antimicrobial peptides. The protein is Undecaprenyl phosphate-alpha-4-amino-4-deoxy-L-arabinose arabinosyl transferase of Edwardsiella ictaluri (strain 93-146).